The sequence spans 167 residues: Alpha-crystallin A chain (167 aa).

At methionine 1 the chain carries N-acetylmethionine. Residues 47 to 158 (YYRQSFFRGF…GERPIPVSRE (112 aa)) form the sHSP domain. Zn(2+)-binding residues include histidine 94, glutamate 96, histidine 101, and histidine 148. Positions 143 to 167 (SLDSSHGERPIPVSREEKPTSAPSS) are disordered. Over residues 147-161 (SHGERPIPVSREEKP) the composition is skewed to basic and acidic residues. The O-linked (GlcNAc) serine glycan is linked to serine 156.

The protein belongs to the small heat shock protein (HSP20) family. As to quaternary structure, heteropolymer composed of three CRYAA and one CRYAB subunits. Inter-subunit bridging via zinc ions enhances stability, which is crucial as there is no protein turn over in the lens. Can also form homodimers and homotetramers (dimers of dimers) which serve as the building blocks of homooligomers. Within homooligomers, the zinc-binding motif is created from residues of 3 different molecules. His-94 and Glu-96 from one molecule are ligands of the zinc ion, and His-101 and His-148 residues from additional molecules complete the site with tetrahedral coordination geometry.

It localises to the cytoplasm. It is found in the nucleus. Functionally, contributes to the transparency and refractive index of the lens. May act as a chaperone, preventing aggregation of various proteins under a wide range of stress conditions. In Pelophylax lessonae (Pool frog), this protein is Alpha-crystallin A chain (CRYAA).